Consider the following 351-residue polypeptide: Porphobilinogen deaminase (351 aa).

Residue cysteine 242 is modified to S-(dipyrrolylmethanemethyl)cysteine.

It belongs to the HMBS family. In terms of assembly, monomer. It depends on dipyrromethane as a cofactor.

It catalyses the reaction 4 porphobilinogen + H2O = hydroxymethylbilane + 4 NH4(+). The protein operates within porphyrin-containing compound metabolism; protoporphyrin-IX biosynthesis; coproporphyrinogen-III from 5-aminolevulinate: step 2/4. In terms of biological role, tetrapolymerization of the monopyrrole PBG into the hydroxymethylbilane pre-uroporphyrinogen in several discrete steps. The protein is Porphobilinogen deaminase of Rickettsia africae (strain ESF-5).